The chain runs to 410 residues: 2-hydroxy-5-methyl-1-naphthoate 7-hydroxylase (410 aa).

A heme-binding site is contributed by cysteine 350.

This sequence belongs to the cytochrome P450 family. Heme is required as a cofactor.

The catalysed reaction is 2-hydroxy-5-methyl-1-naphthoate + 2 reduced [2Fe-2S]-[ferredoxin] + O2 + 2 H(+) = 2,7-dihydroxy-5-methyl-1-naphthoate + 2 oxidized [2Fe-2S]-[ferredoxin] + H2O. It participates in antibiotic biosynthesis. In terms of biological role, involved in the biosynthesis of the naphthoic acid (NA) moiety in the chromophore of the enedyine antitumor antibiotic neocarzinostatin (NCS). Catalyzes the hydroxylation at C-7 position of 2-hydroxy-5-methyl-1-naphthoate to yield 2,7-dihydroxy-5-methyl-1-naphthoate. In Streptomyces carzinostaticus, this protein is 2-hydroxy-5-methyl-1-naphthoate 7-hydroxylase.